We begin with the raw amino-acid sequence, 339 residues long: HTH-type transcriptional regulator PtxS (339 aa).

Positions 12-67 constitute an HTH lacI-type domain; that stretch reads VTISEVARVAGVSKATVSRYIGGDRQLLAEATAKRLEEVIERLGYRPNQMARGLKR. A DNA-binding region (H-T-H motif) is located at residues 14–33; sequence ISEVARVAGVSKATVSRYIG.

Homodimer in solution.

With respect to regulation, 2-ketogluconate acts as a molecular effector and causes dissociation of PtxS from its target promoter. Negatively regulates glucose metabolism by binding directly to the promoter region of the kgu and gad operons. It also negatively regulates its own synthesis. This is HTH-type transcriptional regulator PtxS from Pseudomonas putida (strain ATCC 47054 / DSM 6125 / CFBP 8728 / NCIMB 11950 / KT2440).